We begin with the raw amino-acid sequence, 362 residues long: Peptide chain release factor 1 (362 aa).

The residue at position 240 (Gln-240) is an N5-methylglutamine.

Belongs to the prokaryotic/mitochondrial release factor family. Post-translationally, methylated by PrmC. Methylation increases the termination efficiency of RF1.

It is found in the cytoplasm. Functionally, peptide chain release factor 1 directs the termination of translation in response to the peptide chain termination codons UAG and UAA. This is Peptide chain release factor 1 from Bifidobacterium longum (strain DJO10A).